A 323-amino-acid polypeptide reads, in one-letter code: Acetyl-coenzyme A carboxylase carboxyl transferase subunit alpha (323 aa).

Positions 39–293 constitute a CoA carboxyltransferase C-terminal domain; that stretch reads RLSKKSQQLT…RRALADSLRQ (255 aa).

This sequence belongs to the AccA family. In terms of assembly, acetyl-CoA carboxylase is a heterohexamer composed of biotin carboxyl carrier protein (AccB), biotin carboxylase (AccC) and two subunits each of ACCase subunit alpha (AccA) and ACCase subunit beta (AccD).

The protein localises to the cytoplasm. The catalysed reaction is N(6)-carboxybiotinyl-L-lysyl-[protein] + acetyl-CoA = N(6)-biotinyl-L-lysyl-[protein] + malonyl-CoA. It functions in the pathway lipid metabolism; malonyl-CoA biosynthesis; malonyl-CoA from acetyl-CoA: step 1/1. Component of the acetyl coenzyme A carboxylase (ACC) complex. First, biotin carboxylase catalyzes the carboxylation of biotin on its carrier protein (BCCP) and then the CO(2) group is transferred by the carboxyltransferase to acetyl-CoA to form malonyl-CoA. In Burkholderia vietnamiensis (strain G4 / LMG 22486) (Burkholderia cepacia (strain R1808)), this protein is Acetyl-coenzyme A carboxylase carboxyl transferase subunit alpha.